Reading from the N-terminus, the 133-residue chain is Small ribosomal subunit protein uS8 (133 aa).

It belongs to the universal ribosomal protein uS8 family. As to quaternary structure, part of the 30S ribosomal subunit. Contacts proteins S5 and S12.

Functionally, one of the primary rRNA binding proteins, it binds directly to 16S rRNA central domain where it helps coordinate assembly of the platform of the 30S subunit. The polypeptide is Small ribosomal subunit protein uS8 (Endomicrobium trichonymphae).